A 530-amino-acid chain; its full sequence is Type 2 DNA topoisomerase 6 subunit B (530 aa).

ATP-binding positions include Asn42, Asp76, 97–98 (SK), 106–113 (GMYGLGVK), and Lys427.

The protein belongs to the TOP6B family. Homodimer. Heterotetramer of two Top6A and two Top6B chains.

The catalysed reaction is ATP-dependent breakage, passage and rejoining of double-stranded DNA.. Its function is as follows. Relaxes both positive and negative superturns and exhibits a strong decatenase activity. This is Type 2 DNA topoisomerase 6 subunit B from Saccharolobus solfataricus (strain ATCC 35092 / DSM 1617 / JCM 11322 / P2) (Sulfolobus solfataricus).